The following is an 81-amino-acid chain: Probable small nuclear ribonucleoprotein G (81 aa).

In terms of domain architecture, Sm spans 5–76 (GQPPALKKYM…VVTVEALEPV (72 aa)).

It belongs to the snRNP Sm proteins family.

It is found in the nucleus. In terms of biological role, probable common Sm protein, is found in U1 and U2 snRNPs and may be part of the spliceosome. This is Probable small nuclear ribonucleoprotein G (C29) from Medicago sativa (Alfalfa).